The primary structure comprises 132 residues: Small ribosomal subunit protein uS8 (132 aa).

It belongs to the universal ribosomal protein uS8 family. In terms of assembly, part of the 30S ribosomal subunit. Contacts proteins S5 and S12.

Functionally, one of the primary rRNA binding proteins, it binds directly to 16S rRNA central domain where it helps coordinate assembly of the platform of the 30S subunit. This Mycobacterium leprae (strain Br4923) protein is Small ribosomal subunit protein uS8.